The chain runs to 111 residues: WAP four-disulfide core domain protein 12 (111 aa).

Residues 1–23 (MGSSSFLVLTVSLALVTLVAAEG) form the signal peptide. Positions 27-74 (GIEKAGVCPADNVRCFKSDPPQCHTDQDCLGARKCCYLHCGFKCVIPV) constitute a WAP domain. 4 cysteine pairs are disulfide-bonded: Cys-34–Cys-62, Cys-41–Cys-66, Cys-49–Cys-61, and Cys-55–Cys-70. The interval 80–111 (GGNKDEDVSGPCPEPGWEAKSPGSSSTGCPQK) is disordered. Polar residues predominate over residues 101–111 (PGSSSTGCPQK).

It localises to the secreted. Functionally, antibacterial protein. Putative acid-stable proteinase inhibitor. This is WAP four-disulfide core domain protein 12 (WFDC12) from Papio anubis (Olive baboon).